The following is a 65-amino-acid chain: UPF0434 protein HSM_0997 (65 aa).

It belongs to the UPF0434 family.

This Histophilus somni (strain 2336) (Haemophilus somnus) protein is UPF0434 protein HSM_0997.